Reading from the N-terminus, the 210-residue chain is Probable GTP-binding protein EngB (210 aa).

The EngB-type G domain maps to M27–Q201. GTP is bound by residues G35–S42, G62–L66, D80–G83, T147–D150, and F180–V182. Residues S42 and T64 each contribute to the Mg(2+) site.

Belongs to the TRAFAC class TrmE-Era-EngA-EngB-Septin-like GTPase superfamily. EngB GTPase family. Requires Mg(2+) as cofactor.

Functionally, necessary for normal cell division and for the maintenance of normal septation. This chain is Probable GTP-binding protein EngB, found in Photorhabdus laumondii subsp. laumondii (strain DSM 15139 / CIP 105565 / TT01) (Photorhabdus luminescens subsp. laumondii).